We begin with the raw amino-acid sequence, 315 residues long: Glycerol-3-phosphate dehydrogenase [NAD(P)+] (315 aa).

NADPH contacts are provided by Trp24, Arg44, Arg45, and Lys92. Positions 92 and 120 each coordinate sn-glycerol 3-phosphate. An NADPH-binding site is contributed by Ser124. Positions 175, 228, 238, 239, and 240 each coordinate sn-glycerol 3-phosphate. The active-site Proton acceptor is the Lys175. Arg239 is an NADPH binding site. Glu265 contributes to the NADPH binding site.

It belongs to the NAD-dependent glycerol-3-phosphate dehydrogenase family.

It localises to the cytoplasm. It carries out the reaction sn-glycerol 3-phosphate + NAD(+) = dihydroxyacetone phosphate + NADH + H(+). The enzyme catalyses sn-glycerol 3-phosphate + NADP(+) = dihydroxyacetone phosphate + NADPH + H(+). It participates in membrane lipid metabolism; glycerophospholipid metabolism. Its function is as follows. Catalyzes the reduction of the glycolytic intermediate dihydroxyacetone phosphate (DHAP) to sn-glycerol 3-phosphate (G3P), the key precursor for phospholipid synthesis. The protein is Glycerol-3-phosphate dehydrogenase [NAD(P)+] of Synechococcus sp. (strain JA-2-3B'a(2-13)) (Cyanobacteria bacterium Yellowstone B-Prime).